Here is a 63-residue protein sequence, read N- to C-terminus: MKANELREKSVEELNAELLNLLREQFNLRMQAASGQLQQTHLLKQVRRNVARVKTLLTQKAGA.

This sequence belongs to the universal ribosomal protein uL29 family.

This chain is Large ribosomal subunit protein uL29, found in Enterobacter sp. (strain 638).